A 401-amino-acid polypeptide reads, in one-letter code: Sodium/glutamate symporter (401 aa).

Residues 1–6 lie on the Periplasmic side of the membrane; that stretch reads MFHLDT. Residues 7-24 form a helical membrane-spanning segment; the sequence is LATLVAATLTLLLGRKLV. Residues 25-32 lie on the Cytoplasmic side of the membrane; sequence HSVSFLKK. Residues 33 to 52 traverse the membrane as a helical segment; it reads YTIPEPVAGGLLVALALLVL. At 53–69 the chain is on the periplasmic side; that stretch reads KKSMGWEVNFDMSLRDP. Residues 70–87 form a helical membrane-spanning segment; the sequence is LMLAFFATIGLNANIASL. At 88–93 the chain is on the cytoplasmic side; it reads RAGGRV. Residues 94-116 traverse the membrane as a helical segment; sequence VGIFLIVVVGLLVMQNAIGIGMA. The Periplasmic segment spans residues 117 to 156; it reads SLLGLDPLMGLLAGSITLSGGHGTGAAWSKLFIERYGFTN. A helical transmembrane segment spans residues 157–179; it reads ATEVAMACATFGLVLGGLIGGPV. The Cytoplasmic portion of the chain corresponds to 180-212; sequence ARYLVKHSTTPNGIPDDQEVPTAFEKPDVGRMI. The chain crosses the membrane as a helical span at residues 213–235; it reads TSLVLIETIALIAICLTVGKIVA. Over 236-244 the chain is Periplasmic; that stretch reads QLLAGTAFE. A helical transmembrane segment spans residues 245-267; sequence LPTFVCVLFVGVILSNGLSIMGF. Residues 268–276 are Cytoplasmic-facing; sequence YRVFERAVS. Residues 277-292 form a helical membrane-spanning segment; it reads VLGNVSLSLFLAMALM. At 293–301 the chain is on the periplasmic side; sequence GLKLWELAS. A helical transmembrane segment spans residues 302-324; the sequence is LALPMLAILVVQTIFMALYAIFV. Topologically, residues 325 to 367 are cytoplasmic; the sequence is TWRMMGKNYDAAVLAAGHCGFGLGATPTAIANMQAITERFGPS. Residues 368-390 traverse the membrane as a helical segment; the sequence is HMAFLVVPMVGAFFIDIVNALVI. The Periplasmic portion of the chain corresponds to 391 to 401; it reads KLYLMLPIFAG.

This sequence belongs to the glutamate:Na(+) symporter (ESS) (TC 2.A.27) family.

The protein resides in the cell inner membrane. Inhibited by the uncoupler carbonylcyanide m-chlorophenylhydrazone (CCCP) and the ionophore monensin. Functionally, catalyzes the sodium-dependent, binding-protein-independent transport of glutamate. The sequence is that of Sodium/glutamate symporter from Escherichia coli (strain K12).